The primary structure comprises 192 residues: Ion-translocating oxidoreductase complex subunit B (192 aa).

The segment at 1–26 (MNAIWIAVAAVSLLGLAFGAILGYAS) is hydrophobic. The region spanning 32–91 (EDDPVVEKIDEILPQSQCGQCGYPGCRPYAEAISCNGEKINRCAPGGEAVMLKIAELLNV) is the 4Fe-4S domain. [4Fe-4S] cluster-binding residues include cysteine 49, cysteine 52, cysteine 57, cysteine 74, cysteine 117, cysteine 120, cysteine 123, cysteine 127, cysteine 147, cysteine 150, cysteine 153, and cysteine 157. 2 consecutive 4Fe-4S ferredoxin-type domains span residues 108–137 (MVAFIDENNCIGCTKCIQACPVDAIVGATR) and 138–167 (AMHTVMSDLCTGCNLCVDPCPTHCISLQPV).

It belongs to the 4Fe4S bacterial-type ferredoxin family. RnfB subfamily. The complex is composed of six subunits: RsxA, RsxB, RsxC, RsxD, RsxE and RsxG. [4Fe-4S] cluster serves as cofactor.

It localises to the cell inner membrane. Part of a membrane-bound complex that couples electron transfer with translocation of ions across the membrane. Required to maintain the reduced state of SoxR. The polypeptide is Ion-translocating oxidoreductase complex subunit B (Escherichia coli O17:K52:H18 (strain UMN026 / ExPEC)).